We begin with the raw amino-acid sequence, 210 residues long: Acetoin utilization protein AcuA (210 aa).

The 171-residue stretch at 19 to 189 (VLIEGPISPE…ANCLMARIGK (171 aa)) folds into the N-acetyltransferase domain.

It belongs to the acetyltransferase family. As to quaternary structure, monomer.

It functions in the pathway ketone degradation; acetoin degradation. Part of the acuABC operon, which is possibly involved in the breakdown of acetoin and butanediol. Acts as an acetyltransferase inactivating acetyl-CoA synthetase AcsA via acetylation at a Lys residue. This Bacillus licheniformis (strain ATCC 14580 / DSM 13 / JCM 2505 / CCUG 7422 / NBRC 12200 / NCIMB 9375 / NCTC 10341 / NRRL NRS-1264 / Gibson 46) protein is Acetoin utilization protein AcuA.